Reading from the N-terminus, the 112-residue chain is Ig kappa chain V-III region PC 7132 (112 aa).

The framework-1 stretch occupies residues 1 to 23 (DIVLTQSPASLAVSLGQRATISC). Cysteines 23 and 92 form a disulfide. The interval 24–38 (RASESVDNYGISFMN) is complementarity-determining-1. The framework-2 stretch occupies residues 39–53 (WFQQKPGQPPKLLIY). The tract at residues 54 to 60 (AASNQGS) is complementarity-determining-2. The segment at 61-92 (GVPARFSGSGSGTDFSLNIHPMEEDDTAMYFC) is framework-3. The tract at residues 93-102 (QQSKEVPPYT) is complementarity-determining-3. Positions 103 to 112 (FGGGTKLEIK) are framework-4.

This Mus musculus (Mouse) protein is Ig kappa chain V-III region PC 7132.